Consider the following 237-residue polypeptide: MRPSNRTPAQTRPITITRQFTAHAEGSVLVEFGETKVLCTASFTEGVPRFLKGQGQGWVTAEYGMLPRSTHSRMDREAARGKQSGRTQEIQRLIGRALRACVDMKALGENTIVIDCDVIQADGGTRTASITGACVALVDALNWARGKGIIKSNPLKFLIAAVSVGIYKGEAISDLEYIEDSAAETDMNVVMTETGKIIEIQGTAEGEPFTHEELIELLGLAKNSIREIVDVQKAALN.

Phosphate is bound by residues Arg86 and 124–126 (GTR).

It belongs to the RNase PH family. Homohexameric ring arranged as a trimer of dimers.

It carries out the reaction tRNA(n+1) + phosphate = tRNA(n) + a ribonucleoside 5'-diphosphate. Functionally, phosphorolytic 3'-5' exoribonuclease that plays an important role in tRNA 3'-end maturation. Removes nucleotide residues following the 3'-CCA terminus of tRNAs; can also add nucleotides to the ends of RNA molecules by using nucleoside diphosphates as substrates, but this may not be physiologically important. Probably plays a role in initiation of 16S rRNA degradation (leading to ribosome degradation) during starvation. The polypeptide is Ribonuclease PH (Shewanella sp. (strain W3-18-1)).